The primary structure comprises 359 residues: MSSQTPTAQNLSFVLEGIHRVKFEDRPIPKLKSPHDVIVNVKYTGICGSDVHYWDHGAIGQFVVKEPMVLGHESSGIVTQIGSAVTSLKVGDHVAMEPGIPCRRCEPCKAGKYNLCEKMAFAATPPYDGTLAKYYTLPEDFCYKLPESISLPEGALMEPLGVAVHIVRQANVTPGQTVVVFGAGPVGLLCCAVAKAFGAIRIIAVDIQKPRLDFAKKFAATATFEPSKAPATENATRMIAENDLGRGADVAIDASGVEPSVHTGIHVLRPGGTYVQGGMGRSEMNFPIMAACTKELNIKGSFRYGSGDYKLAVQLVASGQINVKELITGIVKFEDAEQAFKDVKTGKGIKTLIAGPGAA.

Residues C47, H72, and E73 each coordinate Zn(2+). 182 to 187 (GAGPVG) is a binding site for NAD(+).

The protein belongs to the zinc-containing alcohol dehydrogenase family. Requires Zn(2+) as cofactor.

It catalyses the reaction xylitol + NAD(+) = D-xylulose + NADH + H(+). It participates in carbohydrate degradation; L-arabinose degradation via L-arabinitol; D-xylulose 5-phosphate from L-arabinose (fungal route): step 4/5. In terms of biological role, xylitol dehydrogenase which catalyzes the conversion of xylitol to D-xylulose. Xylose is a major component of hemicelluloses such as xylan. Most fungi utilize D-xylose via three enzymatic reactions, xylose reductase (XR), xylitol dehydrogenase (XDH), and xylulokinase, to form xylulose 5-phosphate, which enters pentose phosphate pathway. The polypeptide is Probable D-xylulose reductase A (xdhA) (Emericella nidulans (strain FGSC A4 / ATCC 38163 / CBS 112.46 / NRRL 194 / M139) (Aspergillus nidulans)).